We begin with the raw amino-acid sequence, 862 residues long: Rho guanine nucleotide exchange factor 7 (862 aa).

Residues 1–112 (MNSAEQTVTW…SLVTLNKVTA (112 aa)) enclose the Calponin-homology (CH) domain. Residues Ser-132, Ser-155, Ser-164, Ser-228, and Ser-236 each carry the phosphoserine modification. The region spanning 163 to 222 (NSQLVVRAKFNFQQTNEDELSFSKGDVIHVTRVEEGGWWEGTHNGRTGWFPSNYVREIKP) is the SH3 domain. The DH domain maps to 250–430 (YYNVVLQNIL…KNLSAQCQEV (181 aa)). The PH domain maps to 452 to 557 (DIKTLGSVTY…WVEHLQKQTK (106 aa)). Ser-497 is subject to Phosphoserine. Disordered stretches follow at residues 559 to 591 (TSVSNPTIKPHSVPSHTLPSHPLTPSSKHADSK), 657 to 679 (KTMKKLLPKRKPERKPSDEEFAV), and 728 to 748 (DQSSLDSLGRRSSLSRLEPSD). The span at 572 to 585 (PSHTLPSHPLTPSS) shows a compositional bias: polar residues. Residues 657 to 669 (KTMKKLLPKRKPE) are compositionally biased toward basic residues. The span at 670 to 679 (RKPSDEEFAV) shows a compositional bias: basic and acidic residues. Ser-673 bears the Phosphoserine mark. The span at 731 to 744 (SLDSLGRRSSLSRL) shows a compositional bias: low complexity. Position 776 is a phosphoserine (Ser-776). The stretch at 804 to 854 (KSLVDTVYALKDEVQELRQDNKKMKKSLEEEQRARKDLEKLVRKVLKNMND) forms a coiled coil.

In terms of assembly, interacts with PAK kinases through the SH3 domain. Interacts with unphosphorylated PAK1. Interacts with ITCH. Interacts with SCRIB; interaction is direct and may play a role in regulation of apoptosis. Interacts with GIT1 and TGFB1I1. Interacts with FRMPD4 (via N-terminus). Interacts with CaMK1. Interacts with BIN2. Interacts with PTK2/FAK1 and RAC1. Interacts with PARVB. Interacts with YWHAZ. Interacts (via PH domain) with NOX1 (via FAD-binding FR-type domain). Post-translationally, phosphorylated on Ser-673 by CaMK1; enhancement of GEF activity and downstream activation of RAC1. Phosphorylated by PTK2/FAK1; this promotes interaction with RAC1. As to expression, seems to be expressed in the central nervous system. Isoform B, isoform C and isoform E are expressed with highest levels in brain and testis.

It localises to the cell junction. The protein localises to the focal adhesion. It is found in the cell projection. Its subcellular location is the ruffle. The protein resides in the cytoplasm. It localises to the cell cortex. The protein localises to the lamellipodium. Acts as a RAC1 guanine nucleotide exchange factor (GEF) and can induce membrane ruffling. May function as a positive regulator of apoptosis. Functions in cell migration, attachment and cell spreading. Promotes targeting of RAC1 to focal adhesions. Downstream of NMDA receptors and CaMKK-CaMK1 signaling cascade, promotes the formation of spines and synapses in hippocampal neurons. The polypeptide is Rho guanine nucleotide exchange factor 7 (Arhgef7) (Mus musculus (Mouse)).